Reading from the N-terminus, the 346-residue chain is Melanoma-associated antigen B4 (346 aa).

A compositionally biased stretch (basic residues) spans 1–18 (MPRGQKSKLRAREKRQRT). A disordered region spans residues 1–107 (MPRGQKSKLR…STSTERSLKD (107 aa)). Residues 45–54 (VLRDTASSSL) are compositionally biased toward polar residues. Over residues 92 to 101 (ASSSQASTST) the composition is skewed to low complexity. The MAGE domain maps to 109-307 (LTRKTKMLVQ…NNFPLLYEEA (199 aa)). A disordered region spans residues 311–346 (EEERAGARPRVAARRGTTAMTSAYSRATSSSSSQPM). The span at 318-346 (RPRVAARRGTTAMTSAYSRATSSSSSQPM) shows a compositional bias: low complexity.

Expressed in testis.

It localises to the cytoplasm. In Homo sapiens (Human), this protein is Melanoma-associated antigen B4 (MAGEB4).